The sequence spans 158 residues: Transcription antitermination protein NusB (158 aa).

Basic and acidic residues predominate over residues 1-12 (MKRVEKRAEKQG). Residues 1–20 (MKRVEKRAEKQGRGTARKSR) are disordered.

Belongs to the NusB family.

Its function is as follows. Involved in transcription antitermination. Required for transcription of ribosomal RNA (rRNA) genes. Binds specifically to the boxA antiterminator sequence of the ribosomal RNA (rrn) operons. The polypeptide is Transcription antitermination protein NusB (Nitrosospira multiformis (strain ATCC 25196 / NCIMB 11849 / C 71)).